An 84-amino-acid chain; its full sequence is RNA-binding protein Hfq (84 aa).

A Sm domain is found at 10–70 (DNVLNQVRKN…VSTIIPGKTL (61 aa)).

It belongs to the Hfq family. In terms of assembly, homohexamer.

RNA chaperone that binds small regulatory RNA (sRNAs) and mRNAs to facilitate mRNA translational regulation in response to envelope stress, environmental stress and changes in metabolite concentrations. Also binds with high specificity to tRNAs. The polypeptide is RNA-binding protein Hfq (Natranaerobius thermophilus (strain ATCC BAA-1301 / DSM 18059 / JW/NM-WN-LF)).